The primary structure comprises 502 residues: Protein GIS3 (502 aa).

The protein resides in the cytoplasm. The protein localises to the nucleus. The polypeptide is Protein GIS3 (GIS3) (Saccharomyces cerevisiae (strain ATCC 204508 / S288c) (Baker's yeast)).